An 801-amino-acid polypeptide reads, in one-letter code: tRNA(Met) cytidine acetyltransferase TmcA (801 aa).

Residues glutamine 228, glycine 256 to leucine 265, and arginine 412 each bind ATP. Positions glutamate 457–serine 637 constitute an N-acetyltransferase domain. Acetyl-CoA contacts are provided by residues isoleucine 562–threonine 564, methionine 569–serine 575, and glutamate 602.

It belongs to the RNA cytidine acetyltransferase family. TmcA subfamily.

The protein localises to the cytoplasm. The enzyme catalyses cytidine(34) in elongator tRNA(Met) + acetyl-CoA + ATP + H2O = N(4)-acetylcytidine(34) in elongator tRNA(Met) + ADP + phosphate + CoA + H(+). Catalyzes the formation of N(4)-acetylcytidine (ac(4)C) at the wobble position of tRNA(Met), by using acetyl-CoA as an acetyl donor and ATP (or GTP). This Thermofilum pendens (strain DSM 2475 / Hrk 5) protein is tRNA(Met) cytidine acetyltransferase TmcA.